Here is a 395-residue protein sequence, read N- to C-terminus: Subtilisin-like protease 5 (395 aa).

Positions 1-19 (MGFLTVLYLSLAALSVTNA) are cleaved as a signal peptide. A propeptide spanning residues 20-115 (AQIMSAPNGA…VEPDAIISQH (96 aa)) is cleaved from the precursor. Residues 36 to 112 (YIVVMKDDTS…VAFVEPDAII (77 aa)) enclose the Inhibitor I9 domain. The Peptidase S8 domain maps to 124 to 395 (PWGLSRLSNR…RRLLYNGSGR (272 aa)). Residues D155 and H186 each act as charge relay system in the active site. N-linked (GlcNAc...) asparagine glycans are attached at residues N229 and N247. S341 serves as the catalytic Charge relay system. The segment at 374–395 (QPTIHNPGPDTTRRLLYNGSGR) is disordered. An N-linked (GlcNAc...) asparagine glycan is attached at N391.

Belongs to the peptidase S8 family.

It is found in the secreted. Secreted subtilisin-like serine protease with keratinolytic activity that contributes to pathogenicity. This is Subtilisin-like protease 5 (SUB5) from Arthroderma otae (strain ATCC MYA-4605 / CBS 113480) (Microsporum canis).